Here is a 79-residue protein sequence, read N- to C-terminus: Small ribosomal subunit protein bS18B (79 aa).

Residues 1–11 (MPRPRKADRTP) show a composition bias toward basic and acidic residues. The disordered stretch occupies residues 1-24 (MPRPRKADRTPARQRPNPLDRDGV).

The protein belongs to the bacterial ribosomal protein bS18 family. In terms of assembly, part of the 30S ribosomal subunit. Forms a tight heterodimer with protein bS6.

Functionally, binds as a heterodimer with protein bS6 to the central domain of the 16S rRNA, where it helps stabilize the platform of the 30S subunit. The protein is Small ribosomal subunit protein bS18B of Streptomyces coelicolor (strain ATCC BAA-471 / A3(2) / M145).